Reading from the N-terminus, the 441-residue chain is MADEERDAGLSAADDETDASDDTDQRSSDGDADDADDASSSSDGPVYGRVTPRDETVTHGSDDDASADVAAETGDNGDDSDSDTDAAPDDADDSATDSDADSDDEPRLLADDEHTSHVPEGTYDDSSDESADDVDPDAAADGASPALTGEDEMGGVAPSSVSAEDADFDDEDVGGLVGEAPESDQEMPLTAHIEEMIRRLAVVLGVAGAITLVLFPGADILNALVDTQAAFGVHIPSATDVINFLWNSHIPGAETIVDRRPRLYGPLELILTKLKVAGLAGTVIGLPVFVYETYLFMRPGLYPKERKYYLAAVPTSLVLALVGVLFAHFVVLPAIFAYFTSYTEGTAVVAFGLKETFNLILILMGYMAVVFQIPLFVELAIMMNLVTRRWLEDRRLLFWGAFLGLAFLVSPDPTGMAPIIIGATMITLFEGTLAALRWTGN.

The interval 1–185 is disordered; sequence MADEERDAGL…LVGEAPESDQ (185 aa). The segment covering 13-22 has biased composition (acidic residues); sequence ADDETDASDD. The span at 51–62 shows a compositional bias: basic and acidic residues; sequence TPRDETVTHGSD. Over residues 75-104 the composition is skewed to acidic residues; that stretch reads DNGDDSDSDTDAAPDDADDSATDSDADSDD. Positions 105 to 117 are enriched in basic and acidic residues; sequence EPRLLADDEHTSH. Acidic residues-rich tracts occupy residues 122-138 and 164-173; these read TYDD…DPDA and EDADFDDEDV. 6 helical membrane passes run 200–220, 276–296, 317–337, 357–377, 395–415, and 416–436; these read LAVV…GADI, VAGL…TYLF, LVLA…AIFA, FNLI…PLFV, RLLF…DPTG, and MAPI…LAAL.

Belongs to the TatC family. Forms a complex with TatA.

Its subcellular location is the cell membrane. Functionally, part of the twin-arginine translocation (Tat) system that transports large folded proteins containing a characteristic twin-arginine motif in their signal peptide across membranes. The protein is Sec-independent protein translocase protein TatCo of Haloferax volcanii (strain ATCC 29605 / DSM 3757 / JCM 8879 / NBRC 14742 / NCIMB 2012 / VKM B-1768 / DS2) (Halobacterium volcanii).